Reading from the N-terminus, the 964-residue chain is Cycloisomaltooligosaccharide glucanotransferase (964 aa).

The first 30 residues, 1-30, serve as a signal peptide directing secretion; that stretch reads MRVKILPLVFMTLLLIVPSQMLLPSGQANA. 2 consecutive CBM6 domains span residues 413 to 538 and 740 to 863; these read DRYE…LTLG and NMYE…LKLD.

It belongs to the glycosyl hydrolase 66 family.

The catalysed reaction is cyclizes part of a (1-&gt;6)-alpha-D-glucan chain by formation of a (1-&gt;6)-alpha-D-glucosidic bond.. Produces cycloisomaltooligosaccharide from dextran. This chain is Cycloisomaltooligosaccharide glucanotransferase (cit), found in Niallia circulans (Bacillus circulans).